Reading from the N-terminus, the 190-residue chain is Copper-binding lipoprotein NosL (190 aa).

The first 23 residues, 1–23, serve as a signal peptide directing secretion; it reads MNALHRIGAGTLLAVLLAFGLTG. Residue cysteine 24 is the site of N-palmitoyl cysteine attachment. Cysteine 24 is lipidated: S-diacylglycerol cysteine. The interval 170 to 190 is disordered; it reads MQHGGMHDHAPNGAHNAHAGH. Low complexity predominate over residues 180-190; the sequence is PNGAHNAHAGH.

This sequence belongs to the NosL family. Monomer.

It localises to the cell membrane. Its function is as follows. May act as a metallochaperone involved in nitrous oxide reductase assembly. Specifically binds Cu(+). The protein is Copper-binding lipoprotein NosL of Stutzerimonas stutzeri (Pseudomonas stutzeri).